Reading from the N-terminus, the 208-residue chain is Large ribosomal subunit protein uL4 (208 aa).

A disordered region spans residues 50-83 (VKTRAEVSGGGRKPWKQKGTGRARQGSIRAPQWK).

Belongs to the universal ribosomal protein uL4 family. In terms of assembly, part of the 50S ribosomal subunit.

Functionally, one of the primary rRNA binding proteins, this protein initially binds near the 5'-end of the 23S rRNA. It is important during the early stages of 50S assembly. It makes multiple contacts with different domains of the 23S rRNA in the assembled 50S subunit and ribosome. Forms part of the polypeptide exit tunnel. This Mycoplasma mycoides subsp. mycoides SC (strain CCUG 32753 / NCTC 10114 / PG1) protein is Large ribosomal subunit protein uL4.